The following is a 555-amino-acid chain: 2-isopropylmalate synthase (555 aa).

The 274-residue stretch at 30–303 folds into the Pyruvate carboxyltransferase domain; sequence PIWCSVDLRD…DPGLDCTDIN (274 aa). Residues aspartate 39, histidine 242, histidine 244, and asparagine 278 each contribute to the Mg(2+) site. Positions 437–555 are regulatory domain; it reads QPDARIKFVD…VSAANRVIAK (119 aa).

The protein belongs to the alpha-IPM synthase/homocitrate synthase family. LeuA type 2 subfamily. As to quaternary structure, homodimer. Mg(2+) is required as a cofactor.

It localises to the cytoplasm. It carries out the reaction 3-methyl-2-oxobutanoate + acetyl-CoA + H2O = (2S)-2-isopropylmalate + CoA + H(+). The protein operates within amino-acid biosynthesis; L-leucine biosynthesis; L-leucine from 3-methyl-2-oxobutanoate: step 1/4. In terms of biological role, catalyzes the condensation of the acetyl group of acetyl-CoA with 3-methyl-2-oxobutanoate (2-ketoisovalerate) to form 3-carboxy-3-hydroxy-4-methylpentanoate (2-isopropylmalate). The polypeptide is 2-isopropylmalate synthase (Brucella suis biovar 1 (strain 1330)).